The following is a 217-amino-acid chain: Probable transaldolase (217 aa).

The active-site Schiff-base intermediate with substrate is the lysine 83.

This sequence belongs to the transaldolase family. Type 3B subfamily.

The protein localises to the cytoplasm. The enzyme catalyses D-sedoheptulose 7-phosphate + D-glyceraldehyde 3-phosphate = D-erythrose 4-phosphate + beta-D-fructose 6-phosphate. Its pathway is carbohydrate degradation; pentose phosphate pathway; D-glyceraldehyde 3-phosphate and beta-D-fructose 6-phosphate from D-ribose 5-phosphate and D-xylulose 5-phosphate (non-oxidative stage): step 2/3. Transaldolase is important for the balance of metabolites in the pentose-phosphate pathway. The chain is Probable transaldolase from Chelativorans sp. (strain BNC1).